A 387-amino-acid polypeptide reads, in one-letter code: Putative odorant receptor 19b (387 aa).

Topologically, residues 1–40 are cytoplasmic; sequence MDISKVDSTRALVNHWRIFRIMGIHPPGKRTFWGRHYTAY. Residues 41 to 61 traverse the membrane as a helical segment; it reads SMVWNVTFHICIWVSFSVNLL. Residues 62–71 are Extracellular-facing; it reads QSNSLETFCE. Residues 72–92 traverse the membrane as a helical segment; the sequence is SLCVTMPHTLYMLKLINVRRM. Residues 93–127 are Cytoplasmic-facing; it reads RGEMISSHWLLRLLDKRLGCADERQIIMAGIERAE. A helical membrane pass occupies residues 128-148; it reads FIFRTIFRGLACTVVLGIIYI. Residues 149-171 are Extracellular-facing; the sequence is SASSEPTLMYPTWIPWNWKDSTS. Residues 172 to 192 traverse the membrane as a helical segment; the sequence is AYLATAMLHTTALMANATLVL. Over 193–254 the chain is Cytoplasmic; that stretch reads NLSSYPGTYL…LRLFKSLERS (62 aa). A helical transmembrane segment spans residues 255 to 275; the sequence is LSMTCFLQFFSTACAQCTICY. The Extracellular portion of the chain corresponds to 276 to 285; that stretch reads FLLFGNVGIM. Residues 286–306 traverse the membrane as a helical segment; it reads RFMNMLFLLVILTTETLLLCY. At 307-336 the chain is on the cytoplasmic side; the sequence is TAELPCKEGESLLTAVYSCNWLSQSVNFRR. Residues 337–357 form a helical membrane-spanning segment; sequence LLLLMLARCQIPMILVSGVIV. The Extracellular portion of the chain corresponds to 358-387; that stretch reads PISMKTFTVMIKGAYTMLTLLNEIRKTSLE.

Belongs to the insect chemoreceptor superfamily. Heteromeric odorant receptor channel (TC 1.A.69) family. Or2a subfamily. Interacts with Orco. Complexes exist early in the endomembrane system in olfactory sensory neurons (OSNs), coupling these complexes to the conserved ciliary trafficking pathway.

The protein resides in the cell membrane. Odorant receptor which mediates acceptance or avoidance behavior, depending on its substrates. The odorant receptor repertoire encodes a large collection of odor stimuli that vary widely in identity, intensity, and duration. May form a complex with Orco to form odorant-sensing units, providing sensitive and prolonged odorant signaling and calcium permeability. The polypeptide is Putative odorant receptor 19b (Drosophila melanogaster (Fruit fly)).